A 662-amino-acid chain; its full sequence is Carboxysome assembly protein CsoS2 (662 aa).

An N-terminal domain region spans residues methionine 1 to glutamine 227. Disordered regions lie at residues methionine 1–glycine 258, asparagine 277–alanine 322, and proline 342–cysteine 419. Residues serine 8 to threonine 27 form an N-repeat 1 repeat. Composition is skewed to low complexity over residues alanine 28–serine 57 and serine 64–alanine 76. An N-repeat 2 repeat occupies arginine 58–alanine 72. A compositionally biased stretch (basic and acidic residues) spans arginine 120–threonine 135. Residues valine 141–leucine 150 show a composition bias toward polar residues. The N-repeat 3 repeat unit spans residues serine 147–alanine 168. 3 stretches are compositionally biased toward low complexity: residues lysine 161–lysine 170, glycine 237–glutamine 247, and valine 289–valine 300. M-repeat repeat units lie at residues lysine 228–cysteine 278, lysine 288–cysteine 338, lysine 388–cysteine 436, lysine 446–phenylalanine 491, and valine 496–cysteine 550. Residues lysine 228 to glycine 559 are middle region. The span at proline 391–glutamine 404 shows a compositional bias: polar residues. A C-terminal domain region spans residues glutamate 560 to proline 631. One copy of the C-repeat 1 repeat lies at proline 564–proline 572. Disordered regions lie at residues lysine 588–tryptophan 607 and alanine 619–alanine 662. Residues valine 632 to alanine 662 are C-terminal peptide. The segment covering isoleucine 641–threonine 650 has biased composition (polar residues).

Belongs to the CsoS2 family. Interacts via its N-terminal repeats with RuBisCO. Interacts with the major shell protein CsoS1. In terms of processing, unlike H.neapolitanus and predictions for P.marinus strain MIT 9313, this protein is not thought to have ribosomal frameshifting.

The protein localises to the carboxysome. In terms of biological role, required for alpha-carboxysome (Cb) assembly, mediates interaction between RuBisCO and the Cb shell. The protein is probably intrinsically disordered. The C-terminal repeats act as the encapsulation signal to target proteins to the Cb; they are necessary and sufficient to target both CsoS2 and foreign proteins to the Cb. The N-terminal repeats of this protein bind simultaneously to both subunits of RuBisCO. Probably also interacts with the major shell proteins (CsoS1); that interaction would increase the local concentration of CsoS2 so that it can condense RuBisCO and full carboxysomes can be formed. The polypeptide is Carboxysome assembly protein CsoS2 (Hydrogenovibrio crunogenus (strain DSM 25203 / XCL-2) (Thiomicrospira crunogena)).